The sequence spans 337 residues: Anthranilate phosphoribosyltransferase (337 aa).

5-phospho-alpha-D-ribose 1-diphosphate is bound by residues glycine 82, 85 to 86 (GD), threonine 90, 92 to 95 (NIST), 110 to 118 (KHGNRAMSS), and threonine 122. Residue glycine 82 coordinates anthranilate. Serine 94 serves as a coordination point for Mg(2+). Anthranilate is bound at residue asparagine 113. Arginine 168 is an anthranilate binding site. Residues aspartate 226 and glutamate 227 each contribute to the Mg(2+) site.

This sequence belongs to the anthranilate phosphoribosyltransferase family. As to quaternary structure, homodimer. Mg(2+) serves as cofactor.

The catalysed reaction is N-(5-phospho-beta-D-ribosyl)anthranilate + diphosphate = 5-phospho-alpha-D-ribose 1-diphosphate + anthranilate. It functions in the pathway amino-acid biosynthesis; L-tryptophan biosynthesis; L-tryptophan from chorismate: step 2/5. Its function is as follows. Catalyzes the transfer of the phosphoribosyl group of 5-phosphorylribose-1-pyrophosphate (PRPP) to anthranilate to yield N-(5'-phosphoribosyl)-anthranilate (PRA). The polypeptide is Anthranilate phosphoribosyltransferase (Phenylobacterium zucineum (strain HLK1)).